Reading from the N-terminus, the 91-residue chain is Uteroglobin (91 aa).

The N-terminal stretch at 1–21 (MKLTITLALVTLALLCSPASA) is a signal peptide.

It belongs to the secretoglobin family. Antiparallel homodimer; disulfide-linked. Interaction with LMBR1L is controversial.

It is found in the secreted. Uteroglobin binds progesterone specifically and with high affinity. It may regulate progesterone concentrations reaching the blastocyst. It is also a potent inhibitor of phospholipase A2. In Lepus capensis (Brown hare), this protein is Uteroglobin (SCGB1A1).